Reading from the N-terminus, the 110-residue chain is UPF0060 membrane protein BPSL1340 (110 aa).

The next 4 helical transmembrane spans lie at 9–29 (ALFV…WLVL), 34–54 (PAWL…LLTL), 64–84 (AAYG…VDGV), and 86–106 (LSRW…VIAL).

It belongs to the UPF0060 family.

The protein localises to the cell inner membrane. This is UPF0060 membrane protein BPSL1340 from Burkholderia pseudomallei (strain K96243).